A 340-amino-acid chain; its full sequence is 3-hydroxybenzoate synthase (340 aa).

Positions 147, 154, 207, and 220 each coordinate substrate. The Proton acceptor role is filled by glutamate 334.

Belongs to the FkbO/Hyg5 family. In terms of assembly, trimer.

The enzyme catalyses chorismate = 3-hydroxybenzoate + pyruvate. Functionally, involved in the biosynthesis of BC325, a rapamycin analog containing a 3-hydroxybenzoate starter unit. Catalyzes the hydrolysis of chorismate via an intramolecular mechanism to yield 3-hydroxybenzoate (3HBA). The sequence is that of 3-hydroxybenzoate synthase from Streptomyces hygroscopicus.